The sequence spans 1342 residues: DNA-directed RNA polymerase subunit beta (1342 aa).

It belongs to the RNA polymerase beta chain family. In terms of assembly, the RNAP catalytic core consists of 2 alpha, 1 beta, 1 beta' and 1 omega subunit. When a sigma factor is associated with the core the holoenzyme is formed, which can initiate transcription.

It catalyses the reaction RNA(n) + a ribonucleoside 5'-triphosphate = RNA(n+1) + diphosphate. Its function is as follows. DNA-dependent RNA polymerase catalyzes the transcription of DNA into RNA using the four ribonucleoside triphosphates as substrates. This chain is DNA-directed RNA polymerase subunit beta, found in Blochmanniella floridana.